A 502-amino-acid chain; its full sequence is ATP synthase subunit alpha (502 aa).

169–176 provides a ligand contact to ATP; that stretch reads GDRQTGKT.

This sequence belongs to the ATPase alpha/beta chains family. As to quaternary structure, F-type ATPases have 2 components, CF(1) - the catalytic core - and CF(0) - the membrane proton channel. CF(1) has five subunits: alpha(3), beta(3), gamma(1), delta(1), epsilon(1). CF(0) has three main subunits: a(1), b(2) and c(9-12). The alpha and beta chains form an alternating ring which encloses part of the gamma chain. CF(1) is attached to CF(0) by a central stalk formed by the gamma and epsilon chains, while a peripheral stalk is formed by the delta and b chains.

It localises to the cell membrane. It carries out the reaction ATP + H2O + 4 H(+)(in) = ADP + phosphate + 5 H(+)(out). In terms of biological role, produces ATP from ADP in the presence of a proton gradient across the membrane. The alpha chain is a regulatory subunit. The sequence is that of ATP synthase subunit alpha from Staphylococcus aureus (strain Mu3 / ATCC 700698).